Here is a 463-residue protein sequence, read N- to C-terminus: MWKYLHRSVKNEGTVERLTNLNLFTNHRFKFYSTLKEQSFWRIPFKRRSKLQKWVLSTGIVSFIAFNIWWVYWPHHTFPKPVAKILRKGLHSEIKKEGANYQKSLEYYLEALEECKAENVDLLSDEYTGIEIKIGEMYEKLHMYNDATALYGDMLKKFYNELSKTTDKSTKRKFFLLKRDLQILVRFNEINKDSETNATLLIMHLLLAQREFLENSPEFKNVLSKSELLNNQQLDWKNFKGLPFIGKSKPDYQMHLNSKRKQELKIKEPESEQCVFMKELLTARDLYTRYCLNRSNLSGALNSKITTLEWMLLADSPLDDILLAQAELGSIFYLNSEKFEGSLYAIDNEPYKKSEPLELIRSRLQENQNSCLQYSADCYKSIISFANENQYPKVAMESEMDQRILKALSLAHYGIGVINLHKGRLRASKKELKKAIRISEMIRFNELIEEAQRELKKVDGTPI.

Residues 54-74 form a helical membrane-spanning segment; the sequence is WVLSTGIVSFIAFNIWWVYWP. TPR repeat units follow at residues 84–118, 128–161, 358–389, and 409–442; these read KILR…CKAE, TGIE…FYNE, ELIR…ANEN, and SLAH…SEMI.

The protein belongs to the MGR3 family.

The protein resides in the membrane. The chain is Protein MRG3-like from Saccharomyces cerevisiae (strain ATCC 204508 / S288c) (Baker's yeast).